The chain runs to 549 residues: Nectin-3 (549 aa).

A signal peptide spans 1-57 (MARTPGPAPLCPGGGKAQLSSAFPPAAGLLLPAPTPPPLLLLLIPLLLFSRLCGALA). One can recognise an Ig-like V-type domain in the interval 58 to 165 (GSIIVEPHVT…GNAQSSTTVT (108 aa)). Residues 58-404 (GSIIVEPHVT…ATLKDDTIGT (347 aa)) lie on the Extracellular side of the membrane. N-linked (GlcNAc...) asparagine glycosylation is found at Asn73, Asn83, Asn125, Asn186, Asn222, and Asn331. The cysteines at positions 78 and 148 are disulfide-linked. 2 Ig-like C2-type domains span residues 170 to 258 (PTVS…KDIR) and 269 to 354 (PEVS…KVIY). Disulfide bonds link Cys193/Cys246 and Cys291/Cys338. The chain crosses the membrane as a helical span at residues 405–425 (IIASVVGGALFLVLVSILAGV). At 426 to 549 (FCYRRRRTFR…SVISRREWYV (124 aa)) the chain is on the cytoplasmic side.

Belongs to the nectin family. As to quaternary structure, cis- and trans-homodimer. Can form trans-heterodimers with NECTIN1, NECTIN2, PVR, IGSF4B/Necl-1 and with IGSF4. Interaction between NECTIN1 and NECTIN3 on the pre- and postsynaptic sites, respectively, initiates the formation of puncta adherentia junctions between axons and dendrites. Interacts (via Cytoplasmic domain) with AFDN, providing a connection with the actin cytoskeleton. Binds with low affinity to TIGIT. Ubiquitous with high expression in testes. Localized in spermatids at Sertoli-spermatid junctions. Expressed in ovarian granulosa cells, but only faintly expressed after ovulation.

It is found in the cell membrane. The protein resides in the postsynaptic cell membrane. Its subcellular location is the cell junction. It localises to the adherens junction. In terms of biological role, cell adhesion molecule that promotes cell-cell adhesion through heterophilic trans-interactions with nectins-like or other nectins, such as trans-interaction with NECTIN2 at Sertoli-spermatid junctions. Trans-interaction with PVR induces activation of CDC42 and RAC small G proteins through common signaling molecules such as SRC and RAP1. Induces endocytosis-mediated down-regulation of PVR from the cell surface, resulting in reduction of cell movement and proliferation. Involved in axon guidance by promoting contacts between the commissural axons and the floor plate cells. Also involved in the formation of cell-cell junctions, including adherens junctions and synapses. Promotes formation of checkerboard-like cellular pattern of hair cells and supporting cells in the auditory epithelium via heterophilic interaction with NECTIN1: NECTIN1 is present in the membrane of hair cells and associates with NECTIN3 on supporting cells, thereby mediating heterotypic adhesion between these two cell types. Plays a role in the morphology of the ciliary body. The sequence is that of Nectin-3 from Mus musculus (Mouse).